A 421-amino-acid chain; its full sequence is Phaseolin, beta-type (421 aa).

An N-terminal signal peptide occupies residues 1–24 (MMRARVPLLLLGILFLASLSASFA). The Cupin type-1 domain occupies 237–390 (KSLSKQDNTI…TFSGSGDEVM (154 aa)). N-linked (GlcNAc...) asparagine glycans are attached at residues Asn-252 and Asn-341.

This sequence belongs to the 7S seed storage protein family. In terms of assembly, homotrimer that associates to form a dodecamer.

The protein localises to the vacuole. The protein resides in the aleurone grain. Functionally, major seed storage protein. This Phaseolus vulgaris (Kidney bean) protein is Phaseolin, beta-type.